The chain runs to 458 residues: UDP-N-acetylmuramoylalanine--D-glutamate ligase (458 aa).

Residue 124-130 coordinates ATP; the sequence is GSDGKTT.

Belongs to the MurCDEF family.

It localises to the cytoplasm. It carries out the reaction UDP-N-acetyl-alpha-D-muramoyl-L-alanine + D-glutamate + ATP = UDP-N-acetyl-alpha-D-muramoyl-L-alanyl-D-glutamate + ADP + phosphate + H(+). It participates in cell wall biogenesis; peptidoglycan biosynthesis. Functionally, cell wall formation. Catalyzes the addition of glutamate to the nucleotide precursor UDP-N-acetylmuramoyl-L-alanine (UMA). The chain is UDP-N-acetylmuramoylalanine--D-glutamate ligase from Clostridium botulinum (strain Langeland / NCTC 10281 / Type F).